A 216-amino-acid chain; its full sequence is Orotate phosphoribosyltransferase (216 aa).

5-phospho-alpha-D-ribose 1-diphosphate is bound at residue lysine 30. 38–39 (FF) lines the orotate pocket. 5-phospho-alpha-D-ribose 1-diphosphate contacts are provided by residues 75 to 76 (YK), arginine 102, lysine 103, lysine 106, histidine 108, and 128 to 136 (DDVITAGTA). Residues threonine 132 and arginine 160 each coordinate orotate.

This sequence belongs to the purine/pyrimidine phosphoribosyltransferase family. PyrE subfamily. As to quaternary structure, homodimer. It depends on Mg(2+) as a cofactor.

It catalyses the reaction orotidine 5'-phosphate + diphosphate = orotate + 5-phospho-alpha-D-ribose 1-diphosphate. It participates in pyrimidine metabolism; UMP biosynthesis via de novo pathway; UMP from orotate: step 1/2. Functionally, catalyzes the transfer of a ribosyl phosphate group from 5-phosphoribose 1-diphosphate to orotate, leading to the formation of orotidine monophosphate (OMP). The sequence is that of Orotate phosphoribosyltransferase from Acinetobacter baumannii (strain ACICU).